The following is a 349-amino-acid chain: tRNA N6-adenosine threonylcarbamoyltransferase (349 aa).

Positions 118 and 122 each coordinate Fe cation. Residues 141–145 (LVSGG), Asp174, Gly187, and Asn280 each bind substrate. Asp308 is a binding site for Fe cation.

It belongs to the KAE1 / TsaD family. Fe(2+) serves as cofactor.

It is found in the cytoplasm. It catalyses the reaction L-threonylcarbamoyladenylate + adenosine(37) in tRNA = N(6)-L-threonylcarbamoyladenosine(37) in tRNA + AMP + H(+). Functionally, required for the formation of a threonylcarbamoyl group on adenosine at position 37 (t(6)A37) in tRNAs that read codons beginning with adenine. Is involved in the transfer of the threonylcarbamoyl moiety of threonylcarbamoyl-AMP (TC-AMP) to the N6 group of A37, together with TsaE and TsaB. TsaD likely plays a direct catalytic role in this reaction. This chain is tRNA N6-adenosine threonylcarbamoyltransferase, found in Acidovorax sp. (strain JS42).